Reading from the N-terminus, the 722-residue chain is Polyribonucleotide nucleotidyltransferase (722 aa).

2 residues coordinate Mg(2+): aspartate 487 and aspartate 493. In terms of domain architecture, KH spans 554 to 613 (PRIETFKIPTDKIREVIGTGGKVIREIVEKTGAKVNIEDDGTVKVASSDGESIKAAIKWI). In terms of domain architecture, S1 motif spans 623–691 (GEIYEGTVVK…DRGKTRLSMK (69 aa)). Positions 691 to 722 (KVVDQDTGEDLEAKQKAEAKAEDEAPAQAAGE) are disordered. Over residues 701–713 (LEAKQKAEAKAED) the composition is skewed to basic and acidic residues.

This sequence belongs to the polyribonucleotide nucleotidyltransferase family. Mg(2+) is required as a cofactor.

It localises to the cytoplasm. The catalysed reaction is RNA(n+1) + phosphate = RNA(n) + a ribonucleoside 5'-diphosphate. Its function is as follows. Involved in mRNA degradation. Catalyzes the phosphorolysis of single-stranded polyribonucleotides processively in the 3'- to 5'-direction. The chain is Polyribonucleotide nucleotidyltransferase from Rhodopseudomonas palustris (strain BisB5).